The primary structure comprises 213 residues: Orotate phosphoribosyltransferase (213 aa).

5-phospho-alpha-D-ribose 1-diphosphate is bound at residue K26. Residue 34 to 35 (FF) coordinates orotate. 5-phospho-alpha-D-ribose 1-diphosphate-binding positions include 72 to 73 (YK), R99, K100, K103, H105, and 124 to 132 (DDVITAGTA). Orotate contacts are provided by T128 and R156.

It belongs to the purine/pyrimidine phosphoribosyltransferase family. PyrE subfamily. In terms of assembly, homodimer. The cofactor is Mg(2+).

It catalyses the reaction orotidine 5'-phosphate + diphosphate = orotate + 5-phospho-alpha-D-ribose 1-diphosphate. The protein operates within pyrimidine metabolism; UMP biosynthesis via de novo pathway; UMP from orotate: step 1/2. Its function is as follows. Catalyzes the transfer of a ribosyl phosphate group from 5-phosphoribose 1-diphosphate to orotate, leading to the formation of orotidine monophosphate (OMP). This chain is Orotate phosphoribosyltransferase, found in Aliivibrio fischeri (strain MJ11) (Vibrio fischeri).